We begin with the raw amino-acid sequence, 445 residues long: Glycine betaine monooxygenase oxygenase subunit (445 aa).

A Rieske domain is found at 73-180 (WLFVGMTCEI…VTHAGGFLFV (108 aa)). Residues C115, H117, C135, and H138 each contribute to the [2Fe-2S] cluster site. 2 residues coordinate Fe cation: H234 and H239.

This sequence belongs to the bacterial ring-hydroxylating dioxygenase alpha subunit family. Homotrimer. The system is composed of an oxygenase subunit (BmoA) and a reductase subunit (BmoB). Maximal specific activity is obtained when the ratio of BmoA to BmoB is 5:1. It depends on [2Fe-2S] cluster as a cofactor. Requires Fe cation as cofactor.

It carries out the reaction glycine betaine + NADH + O2 + H(+) = N,N-dimethylglycine + formaldehyde + NAD(+) + H2O. Its activity is regulated as follows. Activity is absolutely dependent on the presence of BmoB. Glycine betaine monooxygenase activity is significantly enhanced by Fe(2+) and severely inhibited by heavy-metal ions, including Co(2+), Mn(2+), Zn(2+), Cu(2+) and Ag(+). Severely inhibited by EDTA. Involved in degradation of glycine betaine. Part of a Rieske-type oxygenase system that catalyzes the conversion of glycine betaine (GB) to dimethylglycine (DMG). This subunit is the terminal oxygenase component of the system. Is specific for GB, and does not show any activity on choline, L-carnitine, stachydrine, dimethylglycine or sarcosine. Activity is strictly dependent on NADH. In Chromohalobacter salexigens (strain ATCC BAA-138 / DSM 3043 / CIP 106854 / NCIMB 13768 / 1H11), this protein is Glycine betaine monooxygenase oxygenase subunit.